We begin with the raw amino-acid sequence, 260 residues long: Indole-3-glycerol phosphate synthase (260 aa).

This sequence belongs to the TrpC family.

The enzyme catalyses 1-(2-carboxyphenylamino)-1-deoxy-D-ribulose 5-phosphate + H(+) = (1S,2R)-1-C-(indol-3-yl)glycerol 3-phosphate + CO2 + H2O. It functions in the pathway amino-acid biosynthesis; L-tryptophan biosynthesis; L-tryptophan from chorismate: step 4/5. This chain is Indole-3-glycerol phosphate synthase, found in Ruminiclostridium cellulolyticum (strain ATCC 35319 / DSM 5812 / JCM 6584 / H10) (Clostridium cellulolyticum).